Here is a 238-residue protein sequence, read N- to C-terminus: Peptidyl-tRNA hydrolase (238 aa).

TRNA is bound at residue tyrosine 14. Residue histidine 19 is the Proton acceptor of the active site. Residues phenylalanine 64, asparagine 66, and asparagine 112 each contribute to the tRNA site. The span at 190-202 (KTEEPAPKPEKKT) shows a compositional bias: basic and acidic residues. Residues 190–225 (KTEEPAPKPEKKTVAKSHIHQARNHNQPRMPESGPM) form a disordered region. Residues 203–212 (VAKSHIHQAR) are compositionally biased toward basic residues.

This sequence belongs to the PTH family. Monomer.

The protein resides in the cytoplasm. The catalysed reaction is an N-acyl-L-alpha-aminoacyl-tRNA + H2O = an N-acyl-L-amino acid + a tRNA + H(+). In terms of biological role, hydrolyzes ribosome-free peptidyl-tRNAs (with 1 or more amino acids incorporated), which drop off the ribosome during protein synthesis, or as a result of ribosome stalling. Its function is as follows. Catalyzes the release of premature peptidyl moieties from peptidyl-tRNA molecules trapped in stalled 50S ribosomal subunits, and thus maintains levels of free tRNAs and 50S ribosomes. In Rhizobium rhizogenes (strain K84 / ATCC BAA-868) (Agrobacterium radiobacter), this protein is Peptidyl-tRNA hydrolase.